Here is a 139-residue protein sequence, read N- to C-terminus: Large ribosomal subunit protein bL21 (139 aa).

This sequence belongs to the bacterial ribosomal protein bL21 family. In terms of assembly, part of the 50S ribosomal subunit. Contacts protein L20.

Functionally, this protein binds to 23S rRNA in the presence of protein L20. In Prochlorococcus marinus (strain NATL2A), this protein is Large ribosomal subunit protein bL21.